A 72-amino-acid polypeptide reads, in one-letter code: Prokaryotic ubiquitin-like protein Pup (72 aa).

A compositionally biased stretch (gly residues) spans 1 to 11 (MAQRDTGGGQQ). The segment at 1–41 (MAQRDTGGGQQRTGRRDDETAEAEVEESGASDLKERHEKLS) is disordered. The segment covering 19-29 (ETAEAEVEESG) has biased composition (acidic residues). Residues 22–61 (EAEVEESGASDLKERHEKLSEDVDSLLDEIDDVLEENAEE) adopt a coiled-coil conformation. Residues 28–66 (SGASDLKERHEKLSEDVDSLLDEIDDVLEENAEEFVKGY) are ARC ATPase binding. Over residues 32-41 (DLKERHEKLS) the composition is skewed to basic and acidic residues. Gln-72 carries the deamidated glutamine modification. Gln-72 is covalently cross-linked (Isoglutamyl lysine isopeptide (Gln-Lys) (interchain with K-? in acceptor proteins)).

This sequence belongs to the prokaryotic ubiquitin-like protein family. Strongly interacts with the proteasome-associated ATPase ARC through a hydrophobic interface; the interacting region of Pup lies in its C-terminal half. There is one Pup binding site per ARC hexamer ring. Is modified by deamidation of its C-terminal glutamine to glutamate by the deamidase Dop, a prerequisite to the subsequent pupylation process.

Its pathway is protein degradation; proteasomal Pup-dependent pathway. Its function is as follows. Protein modifier that is covalently attached to lysine residues of substrate proteins, thereby targeting them for proteasomal degradation. The tagging system is termed pupylation. In Parafrankia sp. (strain EAN1pec), this protein is Prokaryotic ubiquitin-like protein Pup.